We begin with the raw amino-acid sequence, 330 residues long: Flotillin-like protein FloA (330 aa).

The next 2 helical transmembrane spans lie at 3-23 (IISV…TLYM) and 26-46 (LRLW…TLIA).

This sequence belongs to the flotillin-like FloA family. Homooligomerizes.

It is found in the cell membrane. It localises to the membrane raft. Its function is as follows. Found in functional membrane microdomains (FMM) that may be equivalent to eukaryotic membrane rafts. FMMs are highly dynamic and increase in number as cells age. Flotillins are thought to be important factors in membrane fluidity. The chain is Flotillin-like protein FloA from Sorangium cellulosum (strain So ce56) (Polyangium cellulosum (strain So ce56)).